A 753-amino-acid chain; its full sequence is Metal regulatory transcription factor 1 (753 aa).

At Gly-2 the chain carries N-acetylglycine. Ser-5 bears the Phosphoserine mark. The short motif at 133–138 (KRKEVK) is the Nuclear localization signal element. 6 C2H2-type zinc fingers span residues 140-164 (YQCT…QKTH), 170-194 (FVCN…VRVH), 200-224 (FECD…QRLH), 229-253 (FNCE…IRTH), 259-283 (FRCD…VRTH), and 289-313 (FFCP…MKGH). A Phosphoserine modification is found at Ser-305. Disordered stretches follow at residues 308-328 (SHMK…QHNG), 395-466 (ESFN…ALLQ), and 648-715 (SRRK…LSAM). Polar residues predominate over residues 408–417 (PPSTGNSASL). Pro residues predominate over residues 655–666 (SPPPPEPSPQAP). The span at 679–698 (SSAPVPGSSSSTLPSSCEQS) shows a compositional bias: low complexity. Residues 700 to 712 (QAETPSDPQTETL) show a composition bias toward polar residues.

It localises to the nucleus. The protein localises to the cytoplasm. In terms of biological role, zinc-dependent transcriptional regulator of cellular adaption to conditions of exposure to heavy metals. Binds to metal responsive elements (MRE) in promoters and activates the transcription of metallothionein genes like metallothionein-2/MT2A. Also regulates the expression of metalloproteases in response to intracellular zinc and functions as a catabolic regulator of cartilages. This is Metal regulatory transcription factor 1 (MTF1) from Homo sapiens (Human).